The chain runs to 175 residues: CDP-archaeol synthase (175 aa).

The next 4 membrane-spanning stretches (helical) occupy residues 41-61, 82-102, 122-142, and 147-167; these read GFFV…QLLE, TILI…MSFF, FVLG…AEQF, and IAVI…VGYF.

This sequence belongs to the CDP-archaeol synthase family. Mg(2+) serves as cofactor.

The protein resides in the cell membrane. It carries out the reaction 2,3-bis-O-(geranylgeranyl)-sn-glycerol 1-phosphate + CTP + H(+) = CDP-2,3-bis-O-(geranylgeranyl)-sn-glycerol + diphosphate. Its pathway is membrane lipid metabolism; glycerophospholipid metabolism. Functionally, catalyzes the formation of CDP-2,3-bis-(O-geranylgeranyl)-sn-glycerol (CDP-archaeol) from 2,3-bis-(O-geranylgeranyl)-sn-glycerol 1-phosphate (DGGGP) and CTP. This reaction is the third ether-bond-formation step in the biosynthesis of archaeal membrane lipids. This Methanococcoides burtonii (strain DSM 6242 / NBRC 107633 / OCM 468 / ACE-M) protein is CDP-archaeol synthase.